Here is a 285-residue protein sequence, read N- to C-terminus: GTP-binding protein 8 (285 aa).

An EngB-type G domain is found at Q110–S283. Residues G118–S125, G147–K151, D165–G168, T227–D230, and I262–A264 each bind GTP. Residues S125 and T149 each contribute to the Mg(2+) site.

The protein belongs to the TRAFAC class TrmE-Era-EngA-EngB-Septin-like GTPase superfamily. EngB GTPase family. Requires Mg(2+) as cofactor.

In Mus musculus (Mouse), this protein is GTP-binding protein 8 (Gtpbp8).